Reading from the N-terminus, the 120-residue chain is Alpha-amylase inhibitor Haim-2 (120 aa).

An N-terminal signal peptide occupies residues 1–32 (MKRYVCSTFVACVMVLCVIPASGAAAHEAVAE). Cystine bridges form between cysteine 43-cysteine 59 and cysteine 77-cysteine 104.

In terms of biological role, inhibits mammalian alpha-amylases specifically but has no action on plant and microbial alpha-amylases. This chain is Alpha-amylase inhibitor Haim-2, found in Streptomyces griseosporeus.